The primary structure comprises 571 residues: MRVSKYLLSTQKETPANAEVISHQLMLRAGMIRRNASGLYSYLPTGLRVLRKVEAIVREEMNKAGAIEILMPMVQPADLWVETGRWDKFGPELLRFKDRHNRDFVLGPTHEEVITDLIRKEVSSYKQLPLNLYQIQTKFRDEVRPRFGMMRSREFLMKDAYSFHLDVDTMNETYEAMYTAYSNILSRMGLAFRPVLADTGSIGGSMSHEFHVLAQSGEDLIAYSTGSDYAANIEKAESPMPTEPRGAATEALRLVDTPNAKTIAELVEQFDLDITKTVKTLIVKGATEAAPLVALIVRGDHELNEVKADKLDLVASPLEMAPEALIRDAIGAGPGSLGPVGLNMPIIIDHSVSVMSDFAAGANVDDKHYFGINWERDLPLAQAADIRNVVEGEPTPDGLGTYAMARGIEVGHIFQLGTNYSKSMNATVLDENGKSQVLLMGCYGVGVSRIVAAAIEQNFDDRGIVWPEAIAPFSVGILPMNMHKSHRVTDIAEQLYKDLSAAGIEVLLDDRKERPGVMFADMELIGIPHTVVIGDRNIDAGVFEYKNRRTGEKQDIPFDQLVDFLKNAVKS.

Belongs to the class-II aminoacyl-tRNA synthetase family. ProS type 1 subfamily. As to quaternary structure, homodimer.

The protein resides in the cytoplasm. It catalyses the reaction tRNA(Pro) + L-proline + ATP = L-prolyl-tRNA(Pro) + AMP + diphosphate. Catalyzes the attachment of proline to tRNA(Pro) in a two-step reaction: proline is first activated by ATP to form Pro-AMP and then transferred to the acceptor end of tRNA(Pro). As ProRS can inadvertently accommodate and process non-cognate amino acids such as alanine and cysteine, to avoid such errors it has two additional distinct editing activities against alanine. One activity is designated as 'pretransfer' editing and involves the tRNA(Pro)-independent hydrolysis of activated Ala-AMP. The other activity is designated 'posttransfer' editing and involves deacylation of mischarged Ala-tRNA(Pro). The misacylated Cys-tRNA(Pro) is not edited by ProRS. The chain is Proline--tRNA ligase from Shewanella sp. (strain W3-18-1).